The following is a 555-amino-acid chain: Membrane protein insertase YidC (555 aa).

A helical transmembrane segment spans residues 7-24 (ILWVIFSMSLVLLYDNWQ). Composition is skewed to low complexity over residues 40–54 (QQAA…TPQA) and 64–81 (AAPG…QPVG). The tract at residues 40 to 81 (QQAAPAGAGGATPQADVPKANATNAAPGTVPAAPQAAAQPVG) is disordered. 5 helical membrane-spanning segments follow: residues 334-354 (LELV…FWLL), 360-380 (FLGN…LVFF), 430-450 (LGGC…YWVL), 468-488 (LSVP…MFVQ), and 503-523 (VMMI…AGLV).

The protein belongs to the OXA1/ALB3/YidC family. Type 1 subfamily. In terms of assembly, interacts with the Sec translocase complex via SecD. Specifically interacts with transmembrane segments of nascent integral membrane proteins during membrane integration.

It localises to the cell inner membrane. In terms of biological role, required for the insertion and/or proper folding and/or complex formation of integral membrane proteins into the membrane. Involved in integration of membrane proteins that insert both dependently and independently of the Sec translocase complex, as well as at least some lipoproteins. Aids folding of multispanning membrane proteins. This Cupriavidus metallidurans (strain ATCC 43123 / DSM 2839 / NBRC 102507 / CH34) (Ralstonia metallidurans) protein is Membrane protein insertase YidC.